We begin with the raw amino-acid sequence, 387 residues long: Dual-specificity RNA methyltransferase RlmN (387 aa).

E93 functions as the Proton acceptor in the catalytic mechanism. One can recognise a Radical SAM core domain in the interval 99 to 343 (EENRGTLCIS…TTVRKTRGDD (245 aa)). A disulfide bridge connects residues C106 and C348. [4Fe-4S] cluster is bound by residues C113, C117, and C120. Residues 172–173 (GE), S204, 226–228 (SLH), and N305 each bind S-adenosyl-L-methionine. C348 functions as the S-methylcysteine intermediate in the catalytic mechanism.

It belongs to the radical SAM superfamily. RlmN family. Requires [4Fe-4S] cluster as cofactor.

It is found in the cytoplasm. It catalyses the reaction adenosine(2503) in 23S rRNA + 2 reduced [2Fe-2S]-[ferredoxin] + 2 S-adenosyl-L-methionine = 2-methyladenosine(2503) in 23S rRNA + 5'-deoxyadenosine + L-methionine + 2 oxidized [2Fe-2S]-[ferredoxin] + S-adenosyl-L-homocysteine. It carries out the reaction adenosine(37) in tRNA + 2 reduced [2Fe-2S]-[ferredoxin] + 2 S-adenosyl-L-methionine = 2-methyladenosine(37) in tRNA + 5'-deoxyadenosine + L-methionine + 2 oxidized [2Fe-2S]-[ferredoxin] + S-adenosyl-L-homocysteine. Its function is as follows. Specifically methylates position 2 of adenine 2503 in 23S rRNA and position 2 of adenine 37 in tRNAs. m2A2503 modification seems to play a crucial role in the proofreading step occurring at the peptidyl transferase center and thus would serve to optimize ribosomal fidelity. In Janthinobacterium sp. (strain Marseille) (Minibacterium massiliensis), this protein is Dual-specificity RNA methyltransferase RlmN.